The following is a 330-amino-acid chain: MTLIVTGAAGFIGSNLVKALNERGEDGIIAVDNLTRADKFKNLVDCEIDDYLDKTEFVERFARGDFGKVRAIFHEGACSDTMETDGRYMMDNNFRYSRAVLDACLAQGVQFLYASSAATYGGSTRFVEEREVEAPLNVYGYSKFLFDQVIRRVLPTAKSQIAGFRYFNVYGPRESHKARMASVAFHNFNQFRAEGKVKLFGEYNGYAAGEQTRDFVSVEDLVKVNLHFFDHPEKSGIFNLGSGRAQPFNDIASTVVNALRALDGEPALSLAELVQRGLIEYIPFPDALRGKYQCFTQADLTKLRAAGYDAPFLTVQEGVDRYVRWLSGQV.

Residues 11–12 (FI), 32–33 (DN), lysine 39, lysine 54, 75–79 (EGACS), and asparagine 92 each bind NADP(+). Catalysis depends on tyrosine 139, which acts as the Proton acceptor. An NADP(+)-binding site is contributed by lysine 143. Asparagine 168 is a binding site for substrate. The NADP(+) site is built by valine 169 and lysine 177. Lysine 177 acts as the Proton acceptor in catalysis. Residues arginine 179, histidine 186, 200 to 203 (FGEY), arginine 213, and tyrosine 292 contribute to the substrate site.

This sequence belongs to the NAD(P)-dependent epimerase/dehydratase family. HldD subfamily. As to quaternary structure, homopentamer. The cofactor is NADP(+).

The enzyme catalyses ADP-D-glycero-beta-D-manno-heptose = ADP-L-glycero-beta-D-manno-heptose. It functions in the pathway nucleotide-sugar biosynthesis; ADP-L-glycero-beta-D-manno-heptose biosynthesis; ADP-L-glycero-beta-D-manno-heptose from D-glycero-beta-D-manno-heptose 7-phosphate: step 4/4. In terms of biological role, catalyzes the interconversion between ADP-D-glycero-beta-D-manno-heptose and ADP-L-glycero-beta-D-manno-heptose via an epimerization at carbon 6 of the heptose. The chain is ADP-L-glycero-D-manno-heptose-6-epimerase from Paraburkholderia phymatum (strain DSM 17167 / CIP 108236 / LMG 21445 / STM815) (Burkholderia phymatum).